We begin with the raw amino-acid sequence, 925 residues long: NADH:fumarate oxidoreductase (925 aa).

Position 447 is an FMN phosphoryl threonine (threonine 447). FAD is bound by residues alanine 492, glutamate 511, asparagine 519, threonine 520, alanine 525, glycine 526, and valine 633. A fumarate-binding site is contributed by alanine 525. Alanine 525 lines the succinate pocket. Residues histidine 719, serine 731, and glutamate 732 each coordinate succinate. Fumarate contacts are provided by serine 731 and glutamate 732. Arginine 756 functions as the Proton donor in the catalytic mechanism. Fumarate is bound at residue histidine 859. Histidine 859 provides a ligand contact to succinate. Residues histidine 860 and glutamate 889 each contribute to the FAD site. Fumarate contacts are provided by arginine 899 and glycine 902. Residues arginine 899 and glycine 902 each coordinate succinate. The FAD site is built by alanine 904 and valine 905.

It belongs to the FAD-dependent oxidoreductase 2 family. FRD/SDH subfamily. As to quaternary structure, monomer. The cofactor is FAD. Requires FMN as cofactor. Is flavinylated on Thr-447 by ApbE2, encoded in a neighboring gene. Flavinylation is essential for catalytic activity.

The protein localises to the cytoplasm. It catalyses the reaction succinate + NAD(+) = fumarate + NADH + H(+). Functionally, catalyzes the anaerobic reduction of fumarate to succinate. Uses NADH as the inherent electron donor in this process. Is involved in anaerobic fumarate respiration in K.pneumoniae. The protein is NADH:fumarate oxidoreductase of Klebsiella pneumoniae (strain 342).